A 270-amino-acid polypeptide reads, in one-letter code: Splicing factor YJU2 (270 aa).

The tract at residues 1 to 32 (MSERKVLNKYIPPDYDPSIRPPKKKKKFQGPN) is disordered. 4 residues coordinate Zn(2+): Cys-48, Cys-51, Cys-84, and Cys-87. The tract at residues 251–270 (PNFQPPKYAKRKMEKKKVLV) is disordered. The span at 258 to 270 (YAKRKMEKKKVLV) shows a compositional bias: basic residues.

This sequence belongs to the CWC16 family. YJU2 subfamily. As to quaternary structure, component of the spliceosome. Present in the activated B complex, the catalytically activated B* complex which catalyzes the branching, the catalytic step 1 C complex catalyzing the exon ligation, and the postcatalytic P complex containing the ligated exons (mRNA) and the excised lariat intron. Belongs to the 40S cdc5-associated complex (or cwf complex), a spliceosome sub-complex reminiscent of a late-stage spliceosome composed of the U2, U5 and U6 snRNAs and at least brr2, cdc5, cwf2/prp3, cwf3/syf1, cwf4/syf3, cwf5/ecm2, spp42/cwf6, cwf7/spf27, cwf8, cwf9, cwf10, cwf11, cwf12, prp45/cwf13, cwf14, cwf15, cwf16, cwf17, cwf18, cwf19, cwf20, cwf21, cwf22, cwf23, cwf24, cwf25, cwf26, cyp7/cwf27, cwf28, cwf29/ist3, lea1, msl1, prp5/cwf1, prp10, prp12/sap130, prp17, prp22, sap61, sap62, sap114, sap145, slu7, smb1, smd1, smd3, smf1, smg1 and syf2.

It localises to the nucleus. Functionally, part of the spliceosome which catalyzes two sequential transesterification reactions, first the excision of the non-coding intron from pre-mRNA and then the ligation of the coding exons to form the mature mRNA. Plays a role in stabilizing the structure of the spliceosome catalytic core and docking of the branch helix into the active site, producing 5'-exon and lariat intron-3'-intermediates. The protein is Splicing factor YJU2 (cwf16) of Schizosaccharomyces pombe (strain 972 / ATCC 24843) (Fission yeast).